The chain runs to 798 residues: Acetamidase regulatory protein (798 aa).

Residues 20–50 (CVHCHRRKVRCDARLVGLPCSNCRSAGKTDC) constitute a DNA-binding region (zn(2)-C6 fungal-type). Disordered stretches follow at residues 68–96 (VPIRCRPPNPEEAPKPISSLSPSSEPPNA), 115–172 (ANRV…ESRA), and 632–714 (LRTT…TLSA). Low complexity-rich tracts occupy residues 82-94 (KPISSLSPSSEPP) and 133-147 (TRSNNNSGNNTQYQN). Residues 632-641 (LRTTTSDRPR) show a composition bias toward basic and acidic residues. A compositionally biased stretch (polar residues) spans 644–663 (SNLSNNSTNSPASQQKNTSG). Residues 678–687 (PSAPSIPPLQ) are compositionally biased toward pro residues.

It localises to the nucleus. Its function is as follows. Positively regulates the expression of 5 genes involved in the catabolism of certain amides (amdS), omega amino acids (gatA and gabA), and lactams (lamA and lamB) in the presence of omega amino acid inducers. The polypeptide is Acetamidase regulatory protein (amdR) (Emericella nidulans (strain FGSC A4 / ATCC 38163 / CBS 112.46 / NRRL 194 / M139) (Aspergillus nidulans)).